A 207-amino-acid polypeptide reads, in one-letter code: Outer-membrane lipoprotein LolB (207 aa).

The signal sequence occupies residues 1–21 (MPTKTVRCLRLLPLASLLLAA). Residue cysteine 22 is the site of N-palmitoyl cysteine attachment. Cysteine 22 is lipidated: S-diacylglycerol cysteine.

It belongs to the LolB family. Monomer.

Its subcellular location is the cell outer membrane. Plays a critical role in the incorporation of lipoproteins in the outer membrane after they are released by the LolA protein. The polypeptide is Outer-membrane lipoprotein LolB (Pectobacterium atrosepticum (strain SCRI 1043 / ATCC BAA-672) (Erwinia carotovora subsp. atroseptica)).